A 303-amino-acid polypeptide reads, in one-letter code: Zinc import ATP-binding protein ZnuC (303 aa).

The region spanning 17-232 is the ABC transporter domain; it reads VSLENVGVLR…PEYVRLFGSR (216 aa). 49 to 56 provides a ligand contact to ATP; it reads GPNGSGKS. The tract at residues 263–303 is disordered; it reads DHCHPDDGHHAHEHGHAGHEHDHDHPDHAHPHAHEAGERHA.

It belongs to the ABC transporter superfamily. Zinc importer (TC 3.A.1.15.5) family. The complex is composed of two ATP-binding proteins (ZnuC), two transmembrane proteins (ZnuB) and a solute-binding protein (ZnuA).

The protein localises to the cell inner membrane. The enzyme catalyses Zn(2+)(out) + ATP(in) + H2O(in) = Zn(2+)(in) + ADP(in) + phosphate(in) + H(+)(in). In terms of biological role, part of the ABC transporter complex ZnuABC involved in zinc import. Responsible for energy coupling to the transport system. This Rhizobium johnstonii (strain DSM 114642 / LMG 32736 / 3841) (Rhizobium leguminosarum bv. viciae) protein is Zinc import ATP-binding protein ZnuC.